Reading from the N-terminus, the 325-residue chain is Acetyl-coenzyme A carboxylase carboxyl transferase subunit beta (325 aa).

A CoA carboxyltransferase N-terminal domain is found at Leu24–Pro293.

The protein belongs to the AccD/PCCB family. In terms of assembly, acetyl-CoA carboxylase is a heterohexamer composed of biotin carboxyl carrier protein (AccB), biotin carboxylase (AccC) and two subunits each of ACCase subunit alpha (AccA) and ACCase subunit beta (AccD).

Its subcellular location is the cytoplasm. The enzyme catalyses N(6)-carboxybiotinyl-L-lysyl-[protein] + acetyl-CoA = N(6)-biotinyl-L-lysyl-[protein] + malonyl-CoA. It functions in the pathway lipid metabolism; malonyl-CoA biosynthesis; malonyl-CoA from acetyl-CoA: step 1/1. Functionally, component of the acetyl coenzyme A carboxylase (ACC) complex. Biotin carboxylase (BC) catalyzes the carboxylation of biotin on its carrier protein (BCCP) and then the CO(2) group is transferred by the transcarboxylase to acetyl-CoA to form malonyl-CoA. In Rhodopseudomonas palustris (strain BisA53), this protein is Acetyl-coenzyme A carboxylase carboxyl transferase subunit beta.